Consider the following 146-residue polypeptide: 3-hydroxyacyl-[acyl-carrier-protein] dehydratase FabZ (146 aa).

Residue His-46 is part of the active site.

The protein belongs to the thioester dehydratase family. FabZ subfamily.

The protein localises to the cytoplasm. The catalysed reaction is a (3R)-hydroxyacyl-[ACP] = a (2E)-enoyl-[ACP] + H2O. In terms of biological role, involved in unsaturated fatty acids biosynthesis. Catalyzes the dehydration of short chain beta-hydroxyacyl-ACPs and long chain saturated and unsaturated beta-hydroxyacyl-ACPs. The polypeptide is 3-hydroxyacyl-[acyl-carrier-protein] dehydratase FabZ (Acinetobacter baumannii (strain ATCC 17978 / DSM 105126 / CIP 53.77 / LMG 1025 / NCDC KC755 / 5377)).